The primary structure comprises 614 residues: Probable Xaa-Pro aminopeptidase P (614 aa).

Mn(2+)-binding residues include aspartate 409, aspartate 420, glutamate 518, and glutamate 532.

Belongs to the peptidase M24B family. Mn(2+) is required as a cofactor.

The catalysed reaction is Release of any N-terminal amino acid, including proline, that is linked to proline, even from a dipeptide or tripeptide.. Catalyzes the removal of a penultimate prolyl residue from the N-termini of peptides. The sequence is that of Probable Xaa-Pro aminopeptidase P (ampp) from Aspergillus niger (strain ATCC MYA-4892 / CBS 513.88 / FGSC A1513).